Reading from the N-terminus, the 300-residue chain is Acetylglutamate kinase (300 aa).

Residues 73–74 (GG), Arg-95, and Asn-197 contribute to the substrate site.

The protein belongs to the acetylglutamate kinase family. ArgB subfamily.

It is found in the cytoplasm. The catalysed reaction is N-acetyl-L-glutamate + ATP = N-acetyl-L-glutamyl 5-phosphate + ADP. It functions in the pathway amino-acid biosynthesis; L-arginine biosynthesis; N(2)-acetyl-L-ornithine from L-glutamate: step 2/4. Its function is as follows. Catalyzes the ATP-dependent phosphorylation of N-acetyl-L-glutamate. This Bordetella petrii (strain ATCC BAA-461 / DSM 12804 / CCUG 43448) protein is Acetylglutamate kinase.